A 265-amino-acid polypeptide reads, in one-letter code: Small ribosomal subunit protein uS3 (265 aa).

Residues V39 to R107 form the KH type-2 domain. Residues N211 to E265 are disordered. A compositionally biased stretch (basic and acidic residues) spans D221–G239. The span at R240–A251 shows a compositional bias: gly residues.

The protein belongs to the universal ribosomal protein uS3 family. In terms of assembly, part of the 30S ribosomal subunit. Forms a tight complex with proteins S10 and S14.

In terms of biological role, binds the lower part of the 30S subunit head. Binds mRNA in the 70S ribosome, positioning it for translation. This chain is Small ribosomal subunit protein uS3, found in Cupriavidus necator (strain ATCC 17699 / DSM 428 / KCTC 22496 / NCIMB 10442 / H16 / Stanier 337) (Ralstonia eutropha).